A 291-amino-acid polypeptide reads, in one-letter code: Peptide methionine sulfoxide reductase MsrB/MsrA (291 aa).

Residues 1 to 124 (MLANLQHLSD…NSAALRFVAR (124 aa)) enclose the MsrB domain. Residue cysteine 113 is the Nucleophile of the active site. Residues 127–284 (GTALFAAGCF…PGGYCHVSLH (158 aa)) form a peptide methionine sulfoxide reductase A region. Cysteine 135 is a catalytic residue.

It in the N-terminal section; belongs to the MsrB Met sulfoxide reductase family. The protein in the C-terminal section; belongs to the MsrA Met sulfoxide reductase family.

It carries out the reaction L-methionyl-[protein] + [thioredoxin]-disulfide + H2O = L-methionyl-(R)-S-oxide-[protein] + [thioredoxin]-dithiol. The catalysed reaction is L-methionyl-[protein] + [thioredoxin]-disulfide + H2O = L-methionyl-(S)-S-oxide-[protein] + [thioredoxin]-dithiol. It catalyses the reaction [thioredoxin]-disulfide + L-methionine + H2O = L-methionine (S)-S-oxide + [thioredoxin]-dithiol. Functionally, has an important function as a repair enzyme for proteins that have been inactivated by oxidation. Catalyzes the reversible oxidation-reduction of methionine sulfoxide in proteins to methionine. The sequence is that of Peptide methionine sulfoxide reductase MsrB/MsrA (msrAB) from Treponema pallidum (strain Nichols).